We begin with the raw amino-acid sequence, 136 residues long: Putative pre-16S rRNA nuclease (136 aa).

It belongs to the YqgF nuclease family.

Its subcellular location is the cytoplasm. Its function is as follows. Could be a nuclease involved in processing of the 5'-end of pre-16S rRNA. This is Putative pre-16S rRNA nuclease from Francisella tularensis subsp. tularensis (strain WY96-3418).